The following is a 99-amino-acid chain: Ribonuclease P protein component 1 (99 aa).

This sequence belongs to the eukaryotic/archaeal RNase P protein component 1 family. Consists of a catalytic RNA component and at least 4-5 protein subunits.

It localises to the cytoplasm. The enzyme catalyses Endonucleolytic cleavage of RNA, removing 5'-extranucleotides from tRNA precursor.. Part of ribonuclease P, a protein complex that generates mature tRNA molecules by cleaving their 5'-ends. This chain is Ribonuclease P protein component 1, found in Methanococcus vannielii.